Reading from the N-terminus, the 111-residue chain is MTDLEEIRRKKMLELQQKAQQQAMEAEAQEQMRQQLEMQKKQIMMQILTPEARSRLANLRLTRPDFVEQIELQLIQLAQMGRVRSKITDEQLKELLKRVAGKKREIKISRK.

This sequence belongs to the PDCD5 family.

DNA-binding protein which can interact with a randomly chosen 20-mer of double-stranded DNA. This Methanothermobacter thermautotrophicus (strain ATCC 29096 / DSM 1053 / JCM 10044 / NBRC 100330 / Delta H) (Methanobacterium thermoautotrophicum) protein is DNA-binding protein MTH_1615.